The sequence spans 519 residues: MADTEEAYGMPDTPVEAEPKELQCEPKQDNQLGASSKTPTSPPAAFTQQGMEGIKVFLHERELWLKFHEVGTEMIITKAGRRMFPSYKVKVTGLNPKTKYILLMDIVPADDHRYKFADNKWSVTGKAEPAMPGRLYVHPDSPATGAHWMRQLVSFQKLKLTNNHLDPFGHIILNSMHKYQPRLHIVKADENNGFGSKNTAFCTHVFSETDFIAVTSYQNHKITQLKIENNPFAKGFRGSDDMELHRMSRMQSKEYPVVPRSTVRQKVSSNHSPFSQETRNITGSSTLNSQYQCENGVSSTSQDLLPSSSAYTSLPHESGTIYHCTKRKVSEEPAEHSYKKPYMDTSPSEEDPFYRSGYPQPSSSSSSTTSFRTESAQRQACMYASSAPATEPVPSIEDISCNSWSSVPSYSSCTVGGGMQPMERLPYQHFSAHFTSSSLMPRLSNHAGTQPSDSHSMFQHQSSHQAIVRQCNPQSGLQQSSALQPTEFLYPHSVPRTISPHQYHSVHGVGMVPDWNENS.

The tract at residues 1-46 (MADTEEAYGMPDTPVEAEPKELQCEPKQDNQLGASSKTPTSPPAAF) is disordered. Over residues 17–28 (AEPKELQCEPKQ) the composition is skewed to basic and acidic residues. Polar residues predominate over residues 29–39 (DNQLGASSKTP). Residues 63–238 (LWLKFHEVGT…NNPFAKGFRG (176 aa)) constitute a DNA-binding region (T-box). Disordered regions lie at residues 254–282 (EYPV…RNIT), 293–312 (CENG…SAYT), and 326–372 (KRKV…TSFR). Residues 262-282 (TVRQKVSSNHSPFSQETRNIT) show a composition bias toward polar residues. The segment covering 298-309 (SSTSQDLLPSSS) has biased composition (low complexity). Residues 328-342 (KVSEEPAEHSYKKPY) are compositionally biased toward basic and acidic residues.

In terms of assembly, monomer. Homodimer (via the T-box); binds DNA as homodimer.

It is found in the nucleus. The protein resides in the cytoplasm. Functionally, DNA-binding protein that regulates the transcription of several genes and is involved in heart development and limb pattern formation. May bind to the core DNA motif of promoters. This Xenopus laevis (African clawed frog) protein is T-box transcription factor TBX5 (tbx5).